The following is a 1381-amino-acid chain: DNA-directed RNA polymerase subunit beta'' (1381 aa).

Residues cysteine 224, cysteine 295, cysteine 302, and cysteine 305 each contribute to the Zn(2+) site.

Belongs to the RNA polymerase beta' chain family. RpoC2 subfamily. As to quaternary structure, in plastids the minimal PEP RNA polymerase catalytic core is composed of four subunits: alpha, beta, beta', and beta''. When a (nuclear-encoded) sigma factor is associated with the core the holoenzyme is formed, which can initiate transcription. It depends on Zn(2+) as a cofactor.

The protein localises to the plastid. Its subcellular location is the chloroplast. It carries out the reaction RNA(n) + a ribonucleoside 5'-triphosphate = RNA(n+1) + diphosphate. Functionally, DNA-dependent RNA polymerase catalyzes the transcription of DNA into RNA using the four ribonucleoside triphosphates as substrates. This chain is DNA-directed RNA polymerase subunit beta'', found in Lactuca sativa (Garden lettuce).